The primary structure comprises 352 residues: MTASNDKPSLSYRDAGVDIDAGNALVQRIKGAAQATRRPEVMAGLGGFGALFELPKGYQEPVLVSGTDGVGTKLRLAMQMNKHDTIGIDLVAMCVNDLIVQGAEPLFFLDYYATGKLSVDVAATVVTGIGEGCSQAGCSLVGGETAEMPGMYEGDDYDLAGFCVGIVEKSKIIDGSLVKPGDVLIGLASSGVHSNGYSLVRKIVEVSGADLNQPFGDATLGEALLAPTRIYVKPLLELIRQTPVHALSHITGGGLLENLPRVLPAHAKAVVDVNAFEMPELFNWLQKNGNVAWNEMFRTFNCGIGMVVCVPADSADKALELLSAAGETVFRIGSIETHTEEEPVVELKGLVD.

Belongs to the AIR synthase family.

The protein localises to the cytoplasm. The catalysed reaction is 2-formamido-N(1)-(5-O-phospho-beta-D-ribosyl)acetamidine + ATP = 5-amino-1-(5-phospho-beta-D-ribosyl)imidazole + ADP + phosphate + H(+). The protein operates within purine metabolism; IMP biosynthesis via de novo pathway; 5-amino-1-(5-phospho-D-ribosyl)imidazole from N(2)-formyl-N(1)-(5-phospho-D-ribosyl)glycinamide: step 2/2. The polypeptide is Phosphoribosylformylglycinamidine cyclo-ligase (Hahella chejuensis (strain KCTC 2396)).